The primary structure comprises 585 residues: Conglutin alpha 3 (585 aa).

An N-terminal signal peptide occupies residues 1–23 (MANPFLLSLSLCLVLLYTSACLG). 2 disulfide bridges follow: Cys-32-Cys-65 and Cys-108-Cys-406. A Cupin type-1 1 domain is found at 37–258 (LNALEPDNRI…ALNIDEDTVH (222 aa)). Disordered regions lie at residues 113–147 (EEAQ…HFRE), 199–240 (EEYP…ILSG), and 283–402 (KWQE…NGLE). Over residues 136 to 147 (EDSHQKIRHFRE) the composition is skewed to basic and acidic residues. Residues 211–224 (RQQHQRPSGRRHGQ) show a composition bias toward basic residues. Residues 309–320 (REEEEKEEEDEP) show a composition bias toward acidic residues. Residues 338 to 350 (ERGRGRGGSEWKR) are compositionally biased toward basic and acidic residues. One can recognise a Cupin type-1 2 domain in the interval 412–558 (ENIADPTRAD…AFRLSLNQVS (147 aa)). A compositionally biased stretch (polar residues) spans 565–579 (NHNPLVTPQSQSQDH). A disordered region spans residues 565–585 (NHNPLVTPQSQSQDHNLVKVA).

Belongs to the 11S seed storage protein (globulins) family. Hexamer; each subunit is composed of an acidic and a basic chain derived from a single precursor and linked by a disulfide bond. Component of globulins complexes which accumulate in seeds.

In terms of biological role, sulfur-rich seed storage protein. This protein found in the seeds of many leguminous and non-leguminous plants is the source of sulfur-containing amino acids in seed meals. The sequence is that of Conglutin alpha 3 from Lupinus angustifolius (Narrow-leaved blue lupine).